A 312-amino-acid polypeptide reads, in one-letter code: Glyoxylate/hydroxypyruvate reductase A (312 aa).

Arg-227 is an active-site residue. The Proton donor role is filled by His-275.

The protein belongs to the D-isomer specific 2-hydroxyacid dehydrogenase family. GhrA subfamily.

The protein resides in the cytoplasm. The catalysed reaction is glycolate + NADP(+) = glyoxylate + NADPH + H(+). The enzyme catalyses (R)-glycerate + NAD(+) = 3-hydroxypyruvate + NADH + H(+). It carries out the reaction (R)-glycerate + NADP(+) = 3-hydroxypyruvate + NADPH + H(+). Functionally, catalyzes the NADPH-dependent reduction of glyoxylate and hydroxypyruvate into glycolate and glycerate, respectively. In Escherichia fergusonii (strain ATCC 35469 / DSM 13698 / CCUG 18766 / IAM 14443 / JCM 21226 / LMG 7866 / NBRC 102419 / NCTC 12128 / CDC 0568-73), this protein is Glyoxylate/hydroxypyruvate reductase A.